The following is a 478-amino-acid chain: Septin-4 (478 aa).

Disordered stretches follow at residues 40–74 and 87–115; these read DFSG…LYDD and ADNQ…LDPY. The span at 95-108 shows a compositional bias: low complexity; it reads APAPLSPSARPRSP. Phosphoserine is present on residues Ser117 and Ser118. The Septin-type G domain maps to 141–414; sequence KGFDFTLMVA…ENYRAQCIQS (274 aa). The G1 motif stretch occupies residues 151-158; the sequence is GESGLGKS. Residues 151–158 and Thr185 contribute to the GTP site; that span reads GESGLGKS. The segment at 208 to 211 is G3 motif; it reads DTPG. The interval 289 to 292 is G4 motif; the sequence is AKAD. Residue 290 to 298 coordinates GTP; that stretch reads KADTLTPPE. At Ser325 the chain carries Phosphoserine. GTP is bound by residues Gly348 and Arg363. The disordered stretch occupies residues 428-448; sequence LTRESGTDFPIPAVPPGTDPE. Ser432 bears the Phosphoserine mark. Residue Thr434 is modified to Phosphothreonine. Residues 446 to 478 adopt a coiled-coil conformation; sequence DPETEKLIREKDEELRRMQEILHKIQKQMKETY.

This sequence belongs to the TRAFAC class TrmE-Era-EngA-EngB-Septin-like GTPase superfamily. Septin GTPase family. As to quaternary structure, septins polymerize into heterooligomeric protein complexes that form filaments, and can associate with cellular membranes, actin filaments and microtubules. GTPase activity is required for filament formation. Interacts with SEPTIN8. Component of a septin core octameric complex consisting of SEPTIN12, SEPTIN7, SEPTIN6 and SEPTIN2 or SEPTIN4 in the order 12-7-6-2-2-6-7-12 or 12-7-6-4-4-6-7-12. Interacts with SEPTIN14 (via C-terminus). Interacts with DYRK1A. Interacts with SLC6A3/DAT and SNCA/alpha-synuclein. Interacts with STX1A; in the striatum. Interacts with XIAP (via BIR3 domain) following the induction of apoptosis. Interacts with AREL1 (via HECT domain); in the cytoplasm following induction of apoptosis. In terms of processing, ubiquitinated by AREL1. Phosphorylated by DYRK1A.

The protein localises to the cytoplasm. The protein resides in the cell projection. It localises to the cilium. It is found in the flagellum. Its subcellular location is the cytoplasmic vesicle. The protein localises to the secretory vesicle. The protein resides in the axon. It localises to the dendrite. It is found in the perikaryon. Its subcellular location is the synapse. Functionally, filament-forming cytoskeletal GTPase. Pro-apoptotic protein involved in LGR5-positive intestinal stem cell and Paneth cell expansion in the intestines, via its interaction with XIAP. May also play a role in the regulation of cell fate in the intestine. Positive regulator of apoptosis involved in hematopoietic stem cell homeostasis; via its interaction with XIAP. Negative regulator of repair and hair follicle regeneration in response to injury, due to inhibition of hair follicle stem cell proliferation, potentially via its interaction with XIAP. Plays an important role in male fertility and sperm motility. During spermiogenesis, essential for the establishment of the annulus (a fibrous ring structure connecting the midpiece and the principal piece of the sperm flagellum) which is a requisite for the structural and mechanical integrity of the sperm. Involved in the migration of cortical neurons and the formation of neuron leading processes during embryonic development. Required for dopaminergic metabolism in presynaptic autoreceptors; potentially via activity as a presynaptic scaffold protein. This Macaca fascicularis (Crab-eating macaque) protein is Septin-4.